The sequence spans 132 residues: Salivary protein 15 Iper-2 (132 aa).

Residues 1 to 18 form the signal peptide; it reads MKVVCIIVLFVIVAVNES. N-linked (GlcNAc...) asparagine glycans are attached at residues N24, N36, N62, N89, and N101. The interval 113 to 132 is CD4-binding; the sequence is GPNGQTCADKSQCVGHIPGC.

This sequence belongs to the salp15 family. In terms of assembly, interacts with host CD4. Interacts with host DC-SIGN (CD209). As to quaternary structure, (Microbial infection) Interacts with Borrelia outer surface protein C (OspC). Expressed in salivary glands from feeding female ticks. Highly expressed 1 day after start of feeding, and weakly expressed at the initiation of feeding and 4 days after start of feeding.

It localises to the secreted. Functionally, salivary tick protein that downregulates host immune system by binding to both dendritic cells, and CD4(+) T cells. Specifically binds to the CD4 coreceptor on T cells. This interaction prevents the activation of the Src kinase, Lck, and its downstream substrate Zap-70, and results in deficient activation of PLCgamma1, the repression of calcium fluxes triggered by T-cell antigen receptor (TCR) ligation, and a subsequent reduction in interleukin-2 production. This salivary protein also binds to DC-SIGN (CD209) on dendritic cells (DC) and activates the Raf-1 kinase/MEK signaling pathway that results in down-regulating expression of pro-inflammatory cytokines. Furthermore, it inhibits T cell proliferation induced by DCs. It also inhibits in vitro keratinocyte inflammation induced by Borrelia burgdorferi or by the major outer surface protein (OspC) of Borrelia. In addition, it downregulates chemokines and monocyte chemoattractant protein 1, as well as several antimicrobial peptides such as defensins, cathelicidin, psoriasin, and RNase 7. Apart from its immunomodulatory activities, it is also associated with protection of Borrelia spirochetes from antibody-mediated killing through its binding to OspC. In vivo, tests on different immune disease animal models show promising therapeutic results, e.g., in inhibiting HIV infection, experimental autoimmune encephalomyelitis, transplantation rejection, and asthma. In terms of biological role, (Microbial infection) Protects Borrelia garinii from anti-Borrelia antibody-mediated cytotoxicity in vitro. May facilitate B.garinii transmission in mouse model. (Microbial infection) Protects Borrelia burgdorferi from anti-Borrelia antibody-mediated cytotoxicity in vitro. Its function is as follows. (Microbial infection) Protects Borrelia afzelii from anti-Borrelia antibody-mediated cytotoxicity in vitro. This is Salivary protein 15 Iper-2 from Ixodes persulcatus (Taiga tick).